A 113-amino-acid chain; its full sequence is TYRO protein tyrosine kinase-binding protein (113 aa).

Positions 1 to 27 (MGGLEPCSRLLLLPLLLAVGGLRPVQA) are cleaved as a signal peptide. Residues 28 to 40 (QAQSDCSCSTVSP) are Extracellular-facing. A helical transmembrane segment spans residues 41–61 (GVLAGIVLGDLVLTVLIALAV). Position 50 (Asp50) interacts with Ca(2+). The Cytoplasmic portion of the chain corresponds to 62–113 (YFLGRLVPRGRGAAEAATRKQRITETESPYQELQGQRSDVYSDLNTQRPYYK). Residues 75–113 (AEAATRKQRITETESPYQELQGQRSDVYSDLNTQRPYYK) form a disordered region. Positions 80-108 (RKQRITETESPYQELQGQRSDVYSDLNTQ) constitute an ITAM domain. The segment covering 87–113 (TESPYQELQGQRSDVYSDLNTQRPYYK) has biased composition (polar residues). Tyr91 and Tyr102 each carry phosphotyrosine.

Belongs to the TYROBP family. In terms of assembly, homodimer; disulfide-linked. Homotrimer; disulfide-linked. Homotetramer; disulfide-linked. Homotrimers and homotetramers form when low levels of partner receptors are available and is competitive with assembly with interacting receptors. They may represent alternative oligomerization states or may be intermediates in the receptor assembly process. Binding of a metal cation aids in homooligomerization through coordination of the metal ion by the subunits of the oligomer. Interacts with TREM1. Interacts with TREM2. Interacts with CLECSF5. Interacts with CD300LB and CD300C2. Interacts with CD300E. Interacts (via ITAM domain) with SYK (via SH2 domains); activates SYK mediating neutrophils and macrophages integrin-mediated activation. Interacts with KLRC2. Interacts with CD300H. Interacts with KLRD1. In terms of processing, following ligand binding by associated receptors, tyrosine phosphorylated in the ITAM domain which leads to activation of additional tyrosine kinases and subsequent cell activation.

It is found in the cell membrane. Its function is as follows. Adapter protein which non-covalently associates with activating receptors found on the surface of a variety of immune cells to mediate signaling and cell activation following ligand binding by the receptors. TYROBP is tyrosine-phosphorylated in the ITAM domain following ligand binding by the associated receptors which leads to activation of additional tyrosine kinases and subsequent cell activation. Also has an inhibitory role in some cells. Non-covalently associates with activating receptors of the CD300 family to mediate cell activation. Also mediates cell activation through association with activating receptors of the CD200R family. Required for neutrophil activation mediated by integrin. Required for the activation of myeloid cells mediated by the CLEC5A/MDL1 receptor. Associates with natural killer (NK) cell receptors such as the KLRD1/KLRC2 heterodimer to mediate NK cell activation. Associates with TREM1 to mediate activation of neutrophils and monocytes. Associates with TREM2 on monocyte-derived dendritic cells to mediate up-regulation of chemokine receptor CCR7 and dendritic cell maturation and survival. Association with TREM2 mediates cytokine-induced formation of multinucleated giant cells which are formed by the fusion of macrophages. Stabilizes the TREM2 C-terminal fragment (TREM2-CTF) produced by TREM2 ectodomain shedding which suppresses the release of pro-inflammatory cytokines. In microglia, required with TREM2 for phagocytosis of apoptotic neurons. Required with ITGAM/CD11B in microglia to control production of microglial superoxide ions which promote the neuronal apoptosis that occurs during brain development. Promotes pro-inflammatory responses in microglia following nerve injury which accelerates degeneration of injured neurons. Positively regulates the expression of the IRAK3/IRAK-M kinase and IL10 production by liver dendritic cells and inhibits their T cell allosimulatory ability. Negatively regulates B cell proliferation. Required for CSF1-mediated osteoclast cytoskeletal organization. Positively regulates multinucleation during osteoclast development. In Macaca mulatta (Rhesus macaque), this protein is TYRO protein tyrosine kinase-binding protein.